Consider the following 422-residue polypeptide: Putative polyketide beta-ketoacyl synthase 1 (422 aa).

A Ketosynthase family 3 (KS3) domain is found at 2-416; the sequence is TRRVAVTGIG…GFQSAVLLTG (415 aa). Catalysis depends on for beta-ketoacyl synthase activity residues Cys169, His309, and His346.

Belongs to the thiolase-like superfamily. Beta-ketoacyl-ACP synthases family.

It participates in antibiotic biosynthesis; curamycin biosynthesis. This Streptomyces cyaneus (Streptomyces curacoi) protein is Putative polyketide beta-ketoacyl synthase 1 (curA).